A 159-amino-acid polypeptide reads, in one-letter code: Developmental pluripotency-associated protein 3 (159 aa).

Disordered regions lie at residues 1-31 (MDPSQFNPTYIPGSPQMLTEENSRDDSGASQ) and 140-159 (GWDPSENARIGNQDTKPLQP). Polar residues predominate over residues 149-159 (IGNQDTKPLQP).

Low expression in testis, ovary and thymus. Expressed in embryonic stem and carcinoma cells. Highly expressed in testicular germ cell tumors.

Its subcellular location is the nucleus. The protein resides in the cytoplasm. Primordial germ cell (PGCs)-specific protein involved in epigenetic chromatin reprogramming in the zygote following fertilization. In zygotes, DNA demethylation occurs selectively in the paternal pronucleus before the first cell division, while the adjacent maternal pronucleus and certain paternally-imprinted loci are protected from this process. Participates in protection of DNA methylation in the maternal pronucleus by preventing conversion of 5mC to 5hmC: specifically recognizes and binds histone H3 dimethylated at 'Lys-9' (H3K9me2) on maternal genome, and protects maternal genome from TET3-mediated conversion to 5hmC and subsequent DNA demethylation. Does not bind paternal chromatin, which is mainly packed into protamine and does not contain much H3K9me2 mark. Also protects imprinted loci that are marked with H3K9me2 in mature sperm from DNA demethylation in early embryogenesis. May be important for the totipotent/pluripotent states continuing through preimplantation development. Also involved in chromatin condensation in oocytogenesis. The protein is Developmental pluripotency-associated protein 3 (DPPA3) of Homo sapiens (Human).